The following is a 408-amino-acid chain: Peptidase T (408 aa).

His-78 contributes to the Zn(2+) binding site. Asp-80 is an active-site residue. Asp-141 serves as a coordination point for Zn(2+). Glu-175 (proton acceptor) is an active-site residue. Positions 176, 198, and 380 each coordinate Zn(2+).

The protein belongs to the peptidase M20B family. Zn(2+) is required as a cofactor.

It localises to the cytoplasm. It carries out the reaction Release of the N-terminal residue from a tripeptide.. In terms of biological role, cleaves the N-terminal amino acid of tripeptides. This is Peptidase T from Halothermothrix orenii (strain H 168 / OCM 544 / DSM 9562).